The primary structure comprises 1117 residues: Sodium-driven chloride bicarbonate exchanger (1117 aa).

2 disordered regions span residues Met-1 to Val-23 and Gly-58 to Gln-97. Residues Met-1–Cys-508 are Cytoplasmic-facing. Residues Arg-59 to Asp-76 are compositionally biased toward basic residues. At Ser-89 the chain carries Phosphoserine. Thr-94 carries the post-translational modification Phosphothreonine. Ser-275 carries the phosphoserine modification. 2 disordered regions span residues Asp-282–Pro-309 and Trp-431–Gln-476. The chain crosses the membrane as a helical span at residues Leu-509 to Leu-529. Over Leu-530 to Arg-537 the chain is Extracellular. A helical membrane pass occupies residues Ile-538–Gly-558. At Gly-559 to Pro-561 the chain is on the cytoplasmic side. The helical transmembrane segment at Leu-562–Cys-582 threads the bilayer. The Extracellular segment spans residues Lys-583–Ser-595. Residues Ile-596–Val-616 traverse the membrane as a helical segment. The Cytoplasmic segment spans residues Cys-617–Glu-625. A helical membrane pass occupies residues Ala-626–Leu-646. The Extracellular segment spans residues Ser-647–Pro-719. Residues Asn-676, Asn-686, and Asn-696 are each glycosylated (N-linked (GlcNAc...) asparagine). Residues Tyr-720 to Ala-740 traverse the membrane as a helical segment. The Cytoplasmic portion of the chain corresponds to Thr-741–Asp-761. Residues Phe-762 to Ser-782 form a helical membrane-spanning segment. Residues Pro-783–Asn-808 are Extracellular-facing. A helical transmembrane segment spans residues Pro-809–Met-829. Residues Asp-830–Asp-854 lie on the Cytoplasmic side of the membrane. The helical transmembrane segment at Leu-855–Ala-875 threads the bilayer. Topologically, residues Ala-876–Thr-911 are extracellular. A helical transmembrane segment spans residues Gly-912–Ile-932. Over Pro-933–Met-934 the chain is Cytoplasmic. A helical membrane pass occupies residues Pro-935–Phe-955. Over Asp-956 to Trp-997 the chain is Extracellular. Residues Ile-998–Val-1018 form a helical membrane-spanning segment. The Cytoplasmic portion of the chain corresponds to Arg-1019–Ser-1117. Ser-1056 and Ser-1084 each carry phosphoserine.

The protein belongs to the anion exchanger (TC 2.A.31) family. N-glycosylated. In terms of tissue distribution, in the brain, detected in cerebral cortex, subcortex, cerebellum, hippocampus and medulla (at protein level). Expressed in neurons but not in astrocytes (at protein level). Isoforms starting with Met-Glu-Ile-Lys are found predominantly in the brain with lower levels in the eye while isoforms starting with Met-Cys-Asp-Leu are most abundant in the kidney with lower levels in the duodenum, jejunum and ileum (at protein level). In the kidney, isoforms starting with Met-Cys-Asp-Leu are primarily expressed in the cortex, the outer stripe of the outer medulla and the inner stripe of the outer medulla (ISOM) but are not detectable in the inner medulla (IM) while isoforms starting with Met-Glu-Ile-Lys are predominantly expressed in the ISOM and IM. Expressed in the brain, in the hippocampus as well as in dentate gyrus, cortical layers, cerebellum, olfactory bulb and in the epithelial cells of the choroid plexus. Detected in pituitary, testis, kidney and ileum. Detected also in spleen and lung. As to expression, mainly expressed in the jejenum (at protein level).

It is found in the basolateral cell membrane. It localises to the apical cell membrane. The protein localises to the cell projection. Its subcellular location is the dendrite. The protein resides in the axon. It is found in the perikaryon. It localises to the presynapse. The protein localises to the postsynapse. It carries out the reaction 2 hydrogencarbonate(out) + chloride(in) + Na(+)(out) = 2 hydrogencarbonate(in) + chloride(out) + Na(+)(in). In terms of biological role, sodium/bicarbonate cotransporter which plays an important role in regulating intracellular pH. Has been shown to act as a sodium/bicarbonate cotransporter in exchange for intracellular chloride. Has also been shown to act as a sodium/biocarbonate cotransporter which does not couple net influx of bicarbonate to net efflux of chloride, with the observed chloride efflux being due to chloride self-exchange. Controls neuronal pH and may contribute to the secretion of cerebrospinal fluid. Acting on presynaptic intracellular pH, it promotes GABA release, reduces the excitability of CA1 pyramidal neurons, and modulates short-term synaptic plasticity. Required in retinal cells to maintain normal pH which is necessary for normal vision. In the kidney, likely to mediate bicarbonate reclamation in the apical membrane of the proximal tubules. Functionally, sodium/bicarbonate cotransporter which mediates cotransport of sodium and bicarbonate in association with an efflux of intracellular chloride and is involved in NaCl absorption in the small intestine. This Rattus norvegicus (Rat) protein is Sodium-driven chloride bicarbonate exchanger.